Consider the following 474-residue polypeptide: Aspartyl/glutamyl-tRNA(Asn/Gln) amidotransferase subunit B (474 aa).

The protein belongs to the GatB/GatE family. GatB subfamily. Heterotrimer of A, B and C subunits.

It carries out the reaction L-glutamyl-tRNA(Gln) + L-glutamine + ATP + H2O = L-glutaminyl-tRNA(Gln) + L-glutamate + ADP + phosphate + H(+). The catalysed reaction is L-aspartyl-tRNA(Asn) + L-glutamine + ATP + H2O = L-asparaginyl-tRNA(Asn) + L-glutamate + ADP + phosphate + 2 H(+). Allows the formation of correctly charged Asn-tRNA(Asn) or Gln-tRNA(Gln) through the transamidation of misacylated Asp-tRNA(Asn) or Glu-tRNA(Gln) in organisms which lack either or both of asparaginyl-tRNA or glutaminyl-tRNA synthetases. The reaction takes place in the presence of glutamine and ATP through an activated phospho-Asp-tRNA(Asn) or phospho-Glu-tRNA(Gln). This chain is Aspartyl/glutamyl-tRNA(Asn/Gln) amidotransferase subunit B, found in Coprothermobacter proteolyticus (strain ATCC 35245 / DSM 5265 / OCM 4 / BT).